The sequence spans 166 residues: Protein SprT (166 aa).

The region spanning 21–160 (ANQHFSREFP…CQQCQQTLAF (140 aa)) is the SprT-like domain. Zn(2+) is bound at residue His74. The active site involves Glu75. A Zn(2+)-binding site is contributed by His78.

This sequence belongs to the SprT family. Requires Zn(2+) as cofactor.

It localises to the cytoplasm. The sequence is that of Protein SprT from Vibrio atlanticus (strain LGP32) (Vibrio splendidus (strain Mel32)).